The following is a 246-amino-acid chain: CTD nuclear envelope phosphatase 1 homolog (246 aa).

A helical membrane pass occupies residues 3 to 23 (TIAQSVFCFLAGFFNFFLLYF). The region spanning 53 to 220 (LTVKRKILVL…LNLLPFLDAL (168 aa)) is the FCP1 homology domain.

The protein belongs to the dullard family.

It is found in the membrane. Its subcellular location is the nucleus envelope. The catalysed reaction is O-phospho-L-seryl-[protein] + H2O = L-seryl-[protein] + phosphate. It catalyses the reaction O-phospho-L-threonyl-[protein] + H2O = L-threonyl-[protein] + phosphate. Serine/threonine protein phosphatase that may dephosphorylate and activate lipin-like phosphatases. Lipins are phosphatidate phosphatases that catalyze the conversion of phosphatidic acid to diacylglycerol and control the metabolism of fatty acids at different levels. May indirectly modulate the lipid composition of nuclear and/or endoplasmic reticulum membranes and be required for proper nuclear membrane morphology and/or dynamics. Contributes to closure of nuclear envelope (NE) holes and prevents excess nuclear membranes after meiosis and mitosis, possibly through spatial regulation of lipin. May limit the production of endoplasmic reticulum (ER) sheets proximal to the NE to prevent the ER membranes that feed into NE openings from invading the nuclear interior and thereby restrict nuclear transport to nuclear pore complexes (NPCs). May also indirectly regulate the production of lipid droplets and triacylglycerol. This chain is CTD nuclear envelope phosphatase 1 homolog (cnep-1), found in Caenorhabditis elegans.